The sequence spans 149 residues: Nucleoside diphosphate kinase (149 aa).

Positions 9, 57, 85, 91, 102, and 112 each coordinate ATP. H115 acts as the Pros-phosphohistidine intermediate in catalysis.

This sequence belongs to the NDK family. As to quaternary structure, homotetramer. Mg(2+) is required as a cofactor.

Its subcellular location is the cytoplasm. It catalyses the reaction a 2'-deoxyribonucleoside 5'-diphosphate + ATP = a 2'-deoxyribonucleoside 5'-triphosphate + ADP. It carries out the reaction a ribonucleoside 5'-diphosphate + ATP = a ribonucleoside 5'-triphosphate + ADP. In terms of biological role, major role in the synthesis of nucleoside triphosphates other than ATP. The ATP gamma phosphate is transferred to the NDP beta phosphate via a ping-pong mechanism, using a phosphorylated active-site intermediate. The chain is Nucleoside diphosphate kinase from Synechocystis sp. (strain ATCC 27184 / PCC 6803 / Kazusa).